The chain runs to 1606 residues: Thrombospondin type-1 domain-containing protein 7B (1606 aa).

A signal peptide spans 1–31 (MFPKSNLTVTCWVWRSMRKLFLLLSLLLSHA). The Extracellular portion of the chain corresponds to 32-1555 (AHLEGKKDNQ…QPLDPDGRVK (1524 aa)). 18 consecutive TSP type-1 domains span residues 40–98 (NQFI…RVCD), 102–177 (DLFQ…IPCP), 179–233 (DCVV…ISCP), 336–392 (DCET…IVEG), 399–482 (PRYS…IPCS), 484–543 (DCIV…PMCY), 601–661 (DCVL…HSCM), 662–735 (QLHW…LPCK), 737–796 (DCIV…SLCP), 797–869 (VYRW…VPCR), 871–924 (DCTF…CPCD), 925–998 (EFIS…IPCP), 1000–1125 (DCKL…LMCP), 1127–1181 (ECVM…ENCF), 1182–1245 (QFQY…VECV), 1247–1302 (NCQL…TPCY), 1303–1368 (SWVL…VPCP), and 1370–1431 (DCHL…GKCY). N150, N190, and N219 each carry an N-linked (GlcNAc...) asparagine glycan. 3 disulfides stabilise this stretch: C411–C477, C431–C481, and C442–C466. Intrachain disulfides connect C602–C643, C613–C617, and C655–C660. N-linked (GlcNAc...) asparagine glycosylation is present at N683. Disulfide bonds link C738–C779, C749–C753, and C789–C795. N-linked (GlcNAc...) asparagine glycosylation occurs at N757. N842 is a glycosylation site (N-linked (GlcNAc...) asparagine). 3 disulfides stabilise this stretch: C872–C907, C883–C887, and C921–C923. Residue N933 is glycosylated (N-linked (GlcNAc...) asparagine). 6 disulfide bridges follow: C937-C993, C959-C997, C970-C983, C1001-C1038, C1012-C1016, and C1120-C1124. A glycan (N-linked (GlcNAc...) asparagine) is linked at N1186. 3 cysteine pairs are disulfide-bonded: C1248–C1286, C1259–C1263, and C1296–C1301. N1308 carries an N-linked (GlcNAc...) asparagine glycan. 3 disulfides stabilise this stretch: C1371–C1415, C1382–C1386, and C1425–C1430. 2 N-linked (GlcNAc...) asparagine glycosylation sites follow: N1456 and N1524. The helical transmembrane segment at 1556–1576 (IWVYGVSGGAFLIMIFLIFTS) threads the bilayer. Residues 1577–1606 (YLVCKKPKPHQSTPPQQKPLTLAYDGDLDM) are Cytoplasmic-facing. Residues 1583 to 1606 (PKPHQSTPPQQKPLTLAYDGDLDM) are disordered. Positions 1586-1595 (HQSTPPQQKP) are enriched in polar residues.

It localises to the membrane. The polypeptide is Thrombospondin type-1 domain-containing protein 7B (Homo sapiens (Human)).